We begin with the raw amino-acid sequence, 352 residues long: DNA polymerase IV (352 aa).

One can recognise a UmuC domain in the interval 4-185 (IIHVDMDCFF…LPLSKIPGVG (182 aa)). Residues aspartate 8 and aspartate 103 each contribute to the Mg(2+) site. Residue glutamate 104 is part of the active site.

It belongs to the DNA polymerase type-Y family. As to quaternary structure, monomer. The cofactor is Mg(2+).

Its subcellular location is the cytoplasm. The catalysed reaction is DNA(n) + a 2'-deoxyribonucleoside 5'-triphosphate = DNA(n+1) + diphosphate. Poorly processive, error-prone DNA polymerase involved in untargeted mutagenesis. Copies undamaged DNA at stalled replication forks, which arise in vivo from mismatched or misaligned primer ends. These misaligned primers can be extended by PolIV. Exhibits no 3'-5' exonuclease (proofreading) activity. May be involved in translesional synthesis, in conjunction with the beta clamp from PolIII. The chain is DNA polymerase IV from Yersinia pseudotuberculosis serotype O:1b (strain IP 31758).